A 118-amino-acid polypeptide reads, in one-letter code: DNA polymerase epsilon subunit 4 (118 aa).

2 stretches are compositionally biased toward low complexity: residues 1-11 (MAAAAAAGSGT) and 19-35 (GGEA…SAPG). A disordered region spans residues 1–37 (MAAAAAAGSGTPREEEAPGGEAAASQAQAPTSAPGGV). Position 2 is an N-acetylalanine (A2). T11 is modified (phosphothreonine). The residue at position 25 (S25) is a Phosphoserine.

In terms of assembly, component of the DNA polymerase epsilon complex consisting of four subunits: the catalytic subunit POLE and the accessory subunits POLE2, POLE3 and POLE4. Interaction with POLE3 is a prerequisite for further binding with POLE and POLE2.

It is found in the nucleus. Its function is as follows. Accessory component of the DNA polymerase epsilon complex. Participates in DNA repair and in chromosomal DNA replication. This Mus musculus (Mouse) protein is DNA polymerase epsilon subunit 4 (Pole4).